The following is a 562-amino-acid chain: DNA ligase (562 aa).

Glu250 is an ATP binding site. The active-site N6-AMP-lysine intermediate is Lys252. ATP is bound by residues Arg257, Arg272, Glu302, Phe342, Arg417, and Lys423.

This sequence belongs to the ATP-dependent DNA ligase family. Requires Mg(2+) as cofactor. The cofactor is Zn(2+).

It carries out the reaction ATP + (deoxyribonucleotide)n-3'-hydroxyl + 5'-phospho-(deoxyribonucleotide)m = (deoxyribonucleotide)n+m + AMP + diphosphate.. The enzyme catalyses NAD(+) + (deoxyribonucleotide)n-3'-hydroxyl + 5'-phospho-(deoxyribonucleotide)m = (deoxyribonucleotide)n+m + AMP + beta-nicotinamide D-nucleotide.. DNA ligase that seals nicks in double-stranded DNA during DNA replication, DNA recombination and DNA repair. Can use both ATP and NAD(+), but NAD(+) may be a preferred nucleotide cofactor. The protein is DNA ligase of Thermococcus onnurineus (strain NA1).